The following is a 434-amino-acid chain: ATP phosphoribosyltransferase regulatory subunit (434 aa).

This sequence belongs to the class-II aminoacyl-tRNA synthetase family. HisZ subfamily. In terms of assembly, heteromultimer composed of HisG and HisZ subunits.

The protein resides in the cytoplasm. It functions in the pathway amino-acid biosynthesis; L-histidine biosynthesis; L-histidine from 5-phospho-alpha-D-ribose 1-diphosphate: step 1/9. In terms of biological role, required for the first step of histidine biosynthesis. May allow the feedback regulation of ATP phosphoribosyltransferase activity by histidine. The protein is ATP phosphoribosyltransferase regulatory subunit of Geobacter metallireducens (strain ATCC 53774 / DSM 7210 / GS-15).